We begin with the raw amino-acid sequence, 291 residues long: Diaminopimelate epimerase (291 aa).

Residues Asn-11 and Asn-78 each coordinate substrate. Cys-87 acts as the Proton donor in catalysis. Residues 88-89 (GN), Asn-166, Asn-200, and 218-219 (ER) each bind substrate. The Proton acceptor role is filled by Cys-227. Position 228–229 (228–229 (GT)) interacts with substrate.

It belongs to the diaminopimelate epimerase family. As to quaternary structure, homodimer.

It localises to the cytoplasm. The enzyme catalyses (2S,6S)-2,6-diaminopimelate = meso-2,6-diaminopimelate. Its pathway is amino-acid biosynthesis; L-lysine biosynthesis via DAP pathway; DL-2,6-diaminopimelate from LL-2,6-diaminopimelate: step 1/1. In terms of biological role, catalyzes the stereoinversion of LL-2,6-diaminopimelate (L,L-DAP) to meso-diaminopimelate (meso-DAP), a precursor of L-lysine and an essential component of the bacterial peptidoglycan. This chain is Diaminopimelate epimerase, found in Mycolicibacterium smegmatis (strain ATCC 700084 / mc(2)155) (Mycobacterium smegmatis).